An 84-amino-acid polypeptide reads, in one-letter code: Acyl carrier protein MbtL (84 aa).

The 76-residue stretch at 6–81 (STVSTTLLSI…ELEAAIAAKY (76 aa)) folds into the Carrier domain. Residue serine 41 is modified to O-(pantetheine 4'-phosphoryl)serine.

In terms of processing, 4'-phosphopantetheine is transferred from CoA to a specific serine of apo-ACP, leading to the activated holo-ACP form.

Its subcellular location is the cytoplasm. The protein operates within siderophore biosynthesis; mycobactin biosynthesis. In terms of biological role, acyl carrier protein involved in the formation of acyl-S-ACP intermediates within the mycobactin biosynthesis process. The aliphatic chains carried by ACP are subsequently transferred on to the mycobactin core by MbtK. In Mycobacterium bovis (strain ATCC BAA-935 / AF2122/97), this protein is Acyl carrier protein MbtL (mbtL).